A 787-amino-acid polypeptide reads, in one-letter code: Putative pentatricopeptide repeat-containing protein At1g69350, mitochondrial (787 aa).

Residues 1–16 (MTQYMPLFRSCSSLRL) constitute a mitochondrion transit peptide. PPR repeat units lie at residues 33-63 (DPLP…FPYP), 64-98 (DSFM…TTQI), 99-134 (SKFV…GVDD), 135-165 (DAVI…MPVR), 166-200 (DLVA…GVEP), 201-235 (DAVT…MFDL), 236-266 (DETL…IAKK), 267-301 (NAVS…GIEP), 302-336 (NLVT…ELDP), 338-368 (YESL…VSDR), 369-403 (NIVA…RIKP), 404-434 (DAFT…VIRT), 438-468 (DEFV…IKHR), 469-503 (SVVT…YLEM), 504-534 (NEVT…LIIS), 538-568 (DLFT…MSSR), 569-603 (SIVS…GTKP), 604-638 (NEVV…GVSP), and 639-669 (NSEH…MPFL). Residues 674-749 (VWGSLVNGCR…VPGYSAIEID (76 aa)) are type E motif. The type E(+) motif stretch occupies residues 750–780 (QKVFRFGAGEENRIQTDEIYRFLGNLQNLTN).

This sequence belongs to the PPR family. PCMP-E subfamily.

Its subcellular location is the mitochondrion. The chain is Putative pentatricopeptide repeat-containing protein At1g69350, mitochondrial (PCMP-E66) from Arabidopsis thaliana (Mouse-ear cress).